The sequence spans 94 residues: MTLGGLKPEVHAANDEIRQVVAKVADELKSKLNTTEVEPVSYKTQLVAGTNYFIKVKTPAGFAHARVYKDLQQNHSVHSVKADGITEESEIVYF.

The Secondary area of contact motif lies at 45–49 (QLVAG).

The protein belongs to the cystatin family.

The protein localises to the cytoplasm. Functionally, intracellular thiol proteinase inhibitor. Inhibits papain, but not cathepsin B. The chain is Cystatin-A1 (cpiA) from Dictyostelium discoideum (Social amoeba).